The sequence spans 608 residues: UvrABC system protein C (608 aa).

The 79-residue stretch at 22 to 100 (EKPGIYQYLN…IKKYKPRYNV (79 aa)) folds into the GIY-YIG domain. One can recognise a UVR domain in the interval 214–249 (QEISRLLYQRMQDLAAEMKFEEAQKVKEKYALIENY).

This sequence belongs to the UvrC family. In terms of assembly, interacts with UvrB in an incision complex.

Its subcellular location is the cytoplasm. Functionally, the UvrABC repair system catalyzes the recognition and processing of DNA lesions. UvrC both incises the 5' and 3' sides of the lesion. The N-terminal half is responsible for the 3' incision and the C-terminal half is responsible for the 5' incision. The polypeptide is UvrABC system protein C (Bacteroides fragilis (strain ATCC 25285 / DSM 2151 / CCUG 4856 / JCM 11019 / LMG 10263 / NCTC 9343 / Onslow / VPI 2553 / EN-2)).